The chain runs to 25 residues: Ocellatin-P1 (25 aa).

Leu-25 is subject to Leucine amide.

Expressed by the skin glands.

The protein resides in the secreted. In terms of biological role, antibacterial peptide that inhibits reference strains of both Gram-negative bacteria (E.coli, E.cloacae, K.pneumoniae, P.aeruginosa) and Gram-positive bacteria (S.aureus, S.epidermidis, E.faecalis, Streptococcus group B) with relatively low potencies (MIC=25-200 uM). The peptide shows very low hemolytic activity against human erythrocytes. Wheel projection demonstrates the amphipathicity of the alpha-helices is low which may explain the low antibacterial potency. The protein is Ocellatin-P1 of Leptodactylus pentadactylus (Smokey jungle frog).